A 314-amino-acid polypeptide reads, in one-letter code: MSRPRRRGRDIHGVLLLDKPQGMSSNDVLQKVKRIYNANRAGHTGALDPLATGMLPICLGEATKFSQYLLDSDKRYRVIARLGQRTDTSDADGQIVQERPVTFSAEQLASALETFRGDIEQIPSMYSALKYQGRKLYEYARQGIEVPREARPITVYELLFIRHEGNELELEVHCSKGTYIRTIIDDLGEKLGCGAHVTYLRRLTVSKYPVDRMVTLEHLQTLVAQAEQQGVPAAQLLDPLLMPMDSPASDYPVVNLPLTSSVYFKNGNPVRTTGAPLKGLVRVTEGEDDKFIGMGEIDDEGRVAPRRLVVEYPA.

His-43 lines the substrate pocket. Residue Asp-48 is the Nucleophile of the active site. Substrate-binding residues include Tyr-76, Tyr-179, and Leu-200.

Belongs to the pseudouridine synthase TruB family. Type 1 subfamily.

The enzyme catalyses uridine(55) in tRNA = pseudouridine(55) in tRNA. In terms of biological role, responsible for synthesis of pseudouridine from uracil-55 in the psi GC loop of transfer RNAs. The chain is tRNA pseudouridine synthase B from Salmonella typhi.